Consider the following 241-residue polypeptide: Terpene cyclase terB (241 aa).

Helical transmembrane passes span 19–39 (LADT…GAMI), 48–68 (YCMG…YTLV), 75–95 (VELA…FAAT), 114–134 (LIFL…AAEI), and 137–157 (ALAY…GGVC). Residue Asn-163 is glycosylated (N-linked (GlcNAc...) asparagine). The next 2 membrane-spanning stretches (helical) occupy residues 169–189 (SVTL…FAFL) and 198–218 (FAWL…LADI).

It belongs to the paxB family.

The protein localises to the membrane. It participates in secondary metabolite biosynthesis. Terpene cyclase; part of the gene cluster that mediates the biosynthesis of terpendoles, indole-diterpene (IDT) mycotoxins including terpendole I, terpendole K, terpendole C, as well as the kinesin Eg5 inhibitor terpendole E. Terpendoles biosynthesis begins with the synthesis of geranylgeranyl diphosphate (GGPP) by a yet unidentified GGPP synthase. Condensation of indole-3-glycerol phosphate with GGPP by the prenyltransferase terC then forms 3-geranylgeranylindole (3-GGI), followed by epoxidation and cyclization of this intermediate (by the FAD-dependent monooxygeanse terM and the terpene cyclase terB) to form paspaline. The cytochrome monooxygenase terQ then hydroxylates paspalline at C-11 to yield terpendole E. The cytochrome monooxygenase terP converts terpendole E to 13-desoxyterpendole I, and terQ converts 13-desoxyterpendole I into terpendole I. TerF and terK are required for conversion of terpendole I to terpendole C which is further converted to terpendole K. The polypeptide is Terpene cyclase terB (Tolypocladium album (Soil fungus)).